The sequence spans 276 residues: Large ribosomal subunit protein uL2 (276 aa).

2 disordered regions span residues 1-20 (MGIK…TTND) and 219-276 (TVRG…RRKK). The segment covering 7-20 (NPTTNGRRNMTTND) has biased composition (polar residues).

It belongs to the universal ribosomal protein uL2 family. In terms of assembly, part of the 50S ribosomal subunit. Forms a bridge to the 30S subunit in the 70S ribosome.

In terms of biological role, one of the primary rRNA binding proteins. Required for association of the 30S and 50S subunits to form the 70S ribosome, for tRNA binding and peptide bond formation. It has been suggested to have peptidyltransferase activity; this is somewhat controversial. Makes several contacts with the 16S rRNA in the 70S ribosome. In Bacillus mycoides (strain KBAB4) (Bacillus weihenstephanensis), this protein is Large ribosomal subunit protein uL2.